A 323-amino-acid polypeptide reads, in one-letter code: Conjugal transfer protein TrbB (323 aa).

Residue 151–158 (GGTGSGKT) coordinates ATP.

This sequence belongs to the GSP E family.

It is found in the cytoplasm. The chain is Conjugal transfer protein TrbB (trbB) from Rhizobium radiobacter (Agrobacterium tumefaciens).